The primary structure comprises 302 residues: TATA-box-binding protein (302 aa).

Disordered stretches follow at residues 1 to 22 (MEQN…GAMT) and 50 to 81 (SLLE…QTPQ). Over residues 50-70 (SLLEEQQRQQQQQQAASQQQG) the composition is skewed to low complexity. 2 consecutive repeat copies span residues 128–204 (LQNI…ARVV) and 218–295 (IQNM…YPIL).

It belongs to the TBP family. As to expression, enriched in testis but hardly detectable in the ovary (at protein level).

The protein localises to the nucleus. Its function is as follows. General transcription factor that functions at the core of the DNA-binding multiprotein factor TFIID. Binding of TFIID to the TATA box is the initial transcriptional step of the pre-initiation complex (PIC), playing a role in the activation of eukaryotic genes transcribed by RNA polymerase II. Members of the TBP family are differentially required for transcription and development during early embryogenesis. Regulates mRNA levels in the early embryo by both transcriptional and post-transcriptional mechanisms. Required for transcription of a subset of genes at the mid-blastula transition (MBT). Negatively regulates the expression of other embryonic genes, including autoregulation of the tbp promoter itself. Also functions within a transcription-dependent mechanism to direct the temporally-regulated degradation of a subset of maternal mRNAs after the MBT. This is part of a general mechanism to regulate the maternal to zygotic transition and is required for normal embryonic development. Binds to promoters of a subset of genes. Required for gastrulation. This chain is TATA-box-binding protein, found in Danio rerio (Zebrafish).